The chain runs to 274 residues: Ribosome biogenesis protein UTP30 (274 aa).

This sequence belongs to the universal ribosomal protein uL1 family. Highly divergent. In terms of assembly, component of the 90S pre-ribosomes. Interacts with FAF1.

It is found in the nucleus. The protein localises to the nucleolus. In terms of biological role, involved in rRNA-processing and ribosome biosynthesis. This is Ribosome biogenesis protein UTP30 (UTP30) from Saccharomyces cerevisiae (strain ATCC 204508 / S288c) (Baker's yeast).